A 424-amino-acid polypeptide reads, in one-letter code: MARQKQAAPIQRATSSELMHMLPDDLPQKHHNGANMGLANKDTTRDKVHEAADAPGLWQLAFCVAGIYASFLSWGVLQEAITTVSYPVHPPTAAEPEPEKERFTFSIVLNTIQSTFAAVTGFLYLYFSTPKGEKVPSIFPTRKIIFPLVLVSISSSLASPFGYASLAHIDYLTFILAKSCKLLPVMFLHLTIFRKRYPLYKYGVVLLVTLGVATFTLHHPGTSNKVAASATKGTSGSSAWGIFLLSINLLLDGLTNTTQDHVFSSPQLYTRFSGPQMMVAQNVLSTLLTSAYLLIMPHLSSTGILHAILPVPIPPSTETELTAAVSFLSRHPEVLKSVLGFAAFGAMGQLFIFYTLSQFSSLLLVTVTVTRKMLTMLLSVFWFGHSLSAGQWLGIGLVFGGIGAEAVVQRQEKKAKAAKAKKTE.

6 helical membrane-spanning segments follow: residues 57–77 (LWQL…WGVL), 107–127 (IVLN…YLYF), 144–164 (IIFP…FGYA), 173–193 (TFIL…LTIF), 197–217 (YPLY…TFTL), and 234–254 (TSGS…LDGL). Asn-256 is a glycosylation site (N-linked (GlcNAc...) asparagine). Helical transmembrane passes span 293-313 (LLIM…PVPI), 337-357 (SVLG…YTLS), and 380-400 (VFWF…LVFG).

It belongs to the nucleotide-sugar transporter family. SLC35B subfamily.

Its subcellular location is the endoplasmic reticulum membrane. In terms of biological role, may be involved in specific transport of UDP-Gal from the cytosol to the Golgi lumen. Involved in the maintenance of optimal conditions for the folding of secretory pathway proteins in the endoplasmic reticulum. This is UDP-galactose transporter homolog 1 (hut1) from Emericella nidulans (strain FGSC A4 / ATCC 38163 / CBS 112.46 / NRRL 194 / M139) (Aspergillus nidulans).